We begin with the raw amino-acid sequence, 201 residues long: Small ribosomal subunit protein uS4c (201 aa).

Residues 89–151 form the S4 RNA-binding domain; sequence MRLDNILFRL…QKSKTLIQNY (63 aa).

This sequence belongs to the universal ribosomal protein uS4 family. Part of the 30S ribosomal subunit. Contacts protein S5. The interaction surface between S4 and S5 is involved in control of translational fidelity.

It localises to the plastid. Its subcellular location is the chloroplast. In terms of biological role, one of the primary rRNA binding proteins, it binds directly to 16S rRNA where it nucleates assembly of the body of the 30S subunit. Functionally, with S5 and S12 plays an important role in translational accuracy. This chain is Small ribosomal subunit protein uS4c (rps4), found in Phaseolus vulgaris (Kidney bean).